The following is a 228-amino-acid chain: Sugar fermentation stimulation protein homolog (228 aa).

The protein belongs to the SfsA family.

This chain is Sugar fermentation stimulation protein homolog, found in Desulfitobacterium hafniense (strain Y51).